The primary structure comprises 62 residues: Large ribosomal subunit protein uL29 (62 aa).

It belongs to the universal ribosomal protein uL29 family.

In Amoebophilus asiaticus (strain 5a2), this protein is Large ribosomal subunit protein uL29.